A 79-amino-acid polypeptide reads, in one-letter code: Cell division protein ZapB (79 aa).

Positions Phe6–Glu78 form a coiled coil.

It belongs to the ZapB family. In terms of assembly, homodimer. The ends of the coiled-coil dimer bind to each other, forming polymers. Interacts with FtsZ.

It is found in the cytoplasm. Non-essential, abundant cell division factor that is required for proper Z-ring formation. It is recruited early to the divisome by direct interaction with FtsZ, stimulating Z-ring assembly and thereby promoting cell division earlier in the cell cycle. Its recruitment to the Z-ring requires functional FtsA or ZipA. This is Cell division protein ZapB from Yersinia enterocolitica serotype O:8 / biotype 1B (strain NCTC 13174 / 8081).